A 332-amino-acid chain; its full sequence is RNA polymerase principal sigma factor HrdD (332 aa).

Basic residues predominate over residues 1-11 (MATRAVARRKS). Residues 1-25 (MATRAVARRKSAAGETSGSATSVRA) form a disordered region. A compositionally biased stretch (low complexity) spans 13 to 22 (AGETSGSATS). A Polymerase core binding motif is present at residues 124 to 137 (DLIQEGNAGLVRAV). Positions 294 to 313 (LTEVGKEHGLTRERIRQIEK) form a DNA-binding region, H-T-H motif.

The protein belongs to the sigma-70 factor family. As to quaternary structure, interacts transiently with the RNA polymerase catalytic core.

In terms of biological role, sigma factors are initiation factors that promote the attachment of RNA polymerase to specific initiation sites and are then released. This chain is RNA polymerase principal sigma factor HrdD (hrdD), found in Streptomyces coelicolor (strain ATCC BAA-471 / A3(2) / M145).